We begin with the raw amino-acid sequence, 174 residues long: Nucleoside-triphosphatase THEP1 (174 aa).

ATP is bound by residues 8-15 (GIPGIGKS) and 99-106 (LIVIDEVG).

Belongs to the THEP1 NTPase family.

The catalysed reaction is a ribonucleoside 5'-triphosphate + H2O = a ribonucleoside 5'-diphosphate + phosphate + H(+). Functionally, has nucleotide phosphatase activity towards ATP, GTP, CTP, TTP and UTP. May hydrolyze nucleoside diphosphates with lower efficiency. This Methanosarcina barkeri (strain Fusaro / DSM 804) protein is Nucleoside-triphosphatase THEP1.